Here is a 113-residue protein sequence, read N- to C-terminus: UPF0482 protein YnfB (113 aa).

Residues 1 to 28 (MNNTLSKRLCLTAMLTLAAVVYTTSAFA) form the signal peptide.

It belongs to the UPF0482 family.

This is UPF0482 protein YnfB from Salmonella agona (strain SL483).